Consider the following 385-residue polypeptide: Probable endopeptidase MT2245 (385 aa).

Pro residues predominate over residues 235 to 257 (AALPPGAPPGDGPAPGVAPPPGG). The disordered stretch occupies residues 235-268 (AALPPGAPPGDGPAPGVAPPPGGMPGLPFVQPDG). A NlpC/P60 domain is found at 270 to 385 (GGDRTAVVQA…SGPIYDARRY (116 aa)). The active-site Nucleophile is the C300. Catalysis depends on H348, which acts as the Proton acceptor. Residue H360 is part of the active site.

Belongs to the peptidase C40 family.

This Mycobacterium tuberculosis (strain CDC 1551 / Oshkosh) protein is Probable endopeptidase MT2245.